A 158-amino-acid polypeptide reads, in one-letter code: MAKKKTQNSNTIALNKKARHDYFIEERFEAGVSLAGWEVKALRAGKGQLTDSYVIFKNGEAWLLGAQIQPLPQASTHFVTDPTRTRKLLLHRKELTKLKEATEQKGHTVVATALYWKHHLVKCEIATAKGKQLHDKRQTEKERDWNKQKQRILQTNQR.

The disordered stretch occupies residues 131 to 158 (KQLHDKRQTEKERDWNKQKQRILQTNQR). Residues 132 to 147 (QLHDKRQTEKERDWNK) show a composition bias toward basic and acidic residues.

It belongs to the SmpB family.

Its subcellular location is the cytoplasm. In terms of biological role, required for rescue of stalled ribosomes mediated by trans-translation. Binds to transfer-messenger RNA (tmRNA), required for stable association of tmRNA with ribosomes. tmRNA and SmpB together mimic tRNA shape, replacing the anticodon stem-loop with SmpB. tmRNA is encoded by the ssrA gene; the 2 termini fold to resemble tRNA(Ala) and it encodes a 'tag peptide', a short internal open reading frame. During trans-translation Ala-aminoacylated tmRNA acts like a tRNA, entering the A-site of stalled ribosomes, displacing the stalled mRNA. The ribosome then switches to translate the ORF on the tmRNA; the nascent peptide is terminated with the 'tag peptide' encoded by the tmRNA and targeted for degradation. The ribosome is freed to recommence translation, which seems to be the essential function of trans-translation. This is SsrA-binding protein from Teredinibacter turnerae (strain ATCC 39867 / T7901).